A 341-amino-acid polypeptide reads, in one-letter code: MSTWPEVLGALVAGSDLSADQTAWAMGEILSGEATVAQIAGFAIALRAKGETVEEVSGLVDTMYALATPISVPGRLLDIVGTGGDRSMSVNISTMSAIVAAGAGARVVKHGNRSASSQSGSADVLESLGIRLDLPAARLAEIAAEVGITFCFAAAFHPAMRYAAVPRRELGVGTTFNFLGPLTNPAHAHAQAIGCADPRMAPVMAGVFARRGVDAWVFRGDDGLDELTTTTTSRLWWVHGGEVRETSVDPADLGIARAEAGALRGGDAAHNAEVVRRLLAGETGAVRDAVVLNAGAALAVYDEPGSAPDQALVAGVERARESLDSGAAARVLDRWVAATAR.

5-phospho-alpha-D-ribose 1-diphosphate is bound by residues Gly-81, 84–85 (GD), Ser-89, 91–94 (NIST), 109–117 (KHGNRSASS), and Ser-121. Gly-81 contributes to the anthranilate binding site. Ser-93 is a binding site for Mg(2+). Asn-112 lines the anthranilate pocket. Position 167 (Arg-167) interacts with anthranilate. Mg(2+)-binding residues include Asp-225 and Glu-226.

Belongs to the anthranilate phosphoribosyltransferase family. In terms of assembly, homodimer. Requires Mg(2+) as cofactor.

It catalyses the reaction N-(5-phospho-beta-D-ribosyl)anthranilate + diphosphate = 5-phospho-alpha-D-ribose 1-diphosphate + anthranilate. It functions in the pathway amino-acid biosynthesis; L-tryptophan biosynthesis; L-tryptophan from chorismate: step 2/5. Catalyzes the transfer of the phosphoribosyl group of 5-phosphorylribose-1-pyrophosphate (PRPP) to anthranilate to yield N-(5'-phosphoribosyl)-anthranilate (PRA). The sequence is that of Anthranilate phosphoribosyltransferase from Nocardioides sp. (strain ATCC BAA-499 / JS614).